The primary structure comprises 599 residues: Vitamin B12-dependent ribonucleotide reductase (599 aa).

Proline 193 to isoleucine 197 provides a ligand contact to substrate. Positions leucine 519–asparagine 555 are disordered. The segment covering glutamine 526 to alanine 553 has biased composition (low complexity).

It belongs to the ribonucleoside diphosphate reductase class-2 family. The cofactor is adenosylcob(III)alamin.

It catalyses the reaction a 2'-deoxyribonucleoside 5'-diphosphate + [thioredoxin]-disulfide + H2O = a ribonucleoside 5'-diphosphate + [thioredoxin]-dithiol. Catalyzes the reduction of ribonucleotides to deoxyribonucleotides. May function to provide a pool of deoxyribonucleotide precursors for DNA repair during oxygen limitation and/or for immediate growth after restoration of oxygen. This Streptantibioticus cattleyicolor (Streptomyces cattleya) protein is Vitamin B12-dependent ribonucleotide reductase (nrdJ).